The sequence spans 61 residues: UPF0312 protein (61 aa).

It belongs to the UPF0312 family.

In Delftia acidovorans (Pseudomonas acidovorans), this protein is UPF0312 protein.